Here is a 438-residue protein sequence, read N- to C-terminus: Glutamyl-tRNA(Gln) amidotransferase subunit D (438 aa).

The Asparaginase/glutaminase domain maps to 92-422 (PDVTIIGTGG…EEVRRMMLTN (331 aa)). Catalysis depends on residues Thr102, Thr178, Asp179, and Lys256.

Belongs to the asparaginase 1 family. GatD subfamily. Heterodimer of GatD and GatE.

The catalysed reaction is L-glutamyl-tRNA(Gln) + L-glutamine + ATP + H2O = L-glutaminyl-tRNA(Gln) + L-glutamate + ADP + phosphate + H(+). In terms of biological role, allows the formation of correctly charged Gln-tRNA(Gln) through the transamidation of misacylated Glu-tRNA(Gln) in organisms which lack glutaminyl-tRNA synthetase. The reaction takes place in the presence of glutamine and ATP through an activated gamma-phospho-Glu-tRNA(Gln). The GatDE system is specific for glutamate and does not act on aspartate. This Pyrococcus horikoshii (strain ATCC 700860 / DSM 12428 / JCM 9974 / NBRC 100139 / OT-3) protein is Glutamyl-tRNA(Gln) amidotransferase subunit D.